Here is a 102-residue protein sequence, read N- to C-terminus: Putative septation protein SpoVG 1 (102 aa).

It belongs to the SpoVG family.

In terms of biological role, could be involved in septation. The sequence is that of Putative septation protein SpoVG 1 from Listeria monocytogenes serotype 4b (strain F2365).